We begin with the raw amino-acid sequence, 142 residues long: Protein archease (142 aa).

Residues Asp12, Asp141, and Ile142 each contribute to the Ca(2+) site.

The protein belongs to the archease family.

Functionally, activates the tRNA-splicing ligase complex by facilitating the enzymatic turnover of catalytic subunit RtcB. Acts by promoting the guanylylation of RtcB, a key intermediate step in tRNA ligation. Can also alter the NTP specificity of RtcB such that ATP, dGTP or ITP is used efficiently. This is Protein archease from Pyrococcus furiosus (strain ATCC 43587 / DSM 3638 / JCM 8422 / Vc1).